A 437-amino-acid chain; its full sequence is MDTKLDPWSSSDITDYSKLFEEFGISPFENVLPEIPSPHMYMRRKVIFGHRDYEQIAEAMRTGAPFSVMDGFMPSGKVHLGHKMVMDQIVWHQEMGASAFVGIADREAFSVRGFSWQKCREIGVEEYILSLIALGFKPDGLIYFQSGCGSVKDLAFELGAKVNFSELSAIYGFSGETSLSHMLSVATQAADILQPQLEEFGGPKPVVVPVGPDQDPHLRLTRGLAGKMNMFRVEEREDVKTGRKYLSVRGKTAQKEALQELKKRIPGKVKLYEEHIDVLEYPDLAGLEKLVREVTVEFGGYAFIPPASTYHRFMSGLQGGKMSSSIPESQIALTDSPKEGAKKVKRAKTGGCVTLEEQKKLGGKPEECSVFELMLFHLIASDEELLEIKQECISGTRMCGSCKQLAAEKMQEFLKDHQEKRELAREHLDEYRIIYKD.

A 'HIGH' region motif is present at residues 74-82 (PSGKVHLGH). Positions 321–325 (KMSSS) match the 'KMSKS' region motif.

The protein belongs to the class-I aminoacyl-tRNA synthetase family.

It localises to the cytoplasm. The enzyme catalyses tRNA(Trp) + L-tryptophan + ATP = L-tryptophyl-tRNA(Trp) + AMP + diphosphate + H(+). In Methanosarcina acetivorans (strain ATCC 35395 / DSM 2834 / JCM 12185 / C2A), this protein is Tryptophan--tRNA ligase.